Consider the following 319-residue polypeptide: Acetyl-coenzyme A carboxylase carboxyl transferase subunit alpha (319 aa).

In terms of domain architecture, CoA carboxyltransferase C-terminal spans 35-296 (DLDKEIEQLE…KATLVANLAE (262 aa)).

Belongs to the AccA family. As to quaternary structure, acetyl-CoA carboxylase is a heterohexamer composed of biotin carboxyl carrier protein (AccB), biotin carboxylase (AccC) and two subunits each of ACCase subunit alpha (AccA) and ACCase subunit beta (AccD).

It localises to the cytoplasm. It carries out the reaction N(6)-carboxybiotinyl-L-lysyl-[protein] + acetyl-CoA = N(6)-biotinyl-L-lysyl-[protein] + malonyl-CoA. It functions in the pathway lipid metabolism; malonyl-CoA biosynthesis; malonyl-CoA from acetyl-CoA: step 1/1. Its function is as follows. Component of the acetyl coenzyme A carboxylase (ACC) complex. First, biotin carboxylase catalyzes the carboxylation of biotin on its carrier protein (BCCP) and then the CO(2) group is transferred by the carboxyltransferase to acetyl-CoA to form malonyl-CoA. The sequence is that of Acetyl-coenzyme A carboxylase carboxyl transferase subunit alpha from Photobacterium profundum (strain SS9).